A 141-amino-acid chain; its full sequence is Protein KRTCAP2 homolog (141 aa).

A run of 4 helical transmembrane segments spans residues 11 to 31, 42 to 62, 74 to 94, and 97 to 117; these read VVSS…LRFC, VLLG…CVSN, AKLL…AGLV, and VCAT…NRIS.

Belongs to the KRTCAP2 family. Component of the oligosaccharyltransferase (OST) complex.

It is found in the membrane. Subunit of the oligosaccharyl transferase (OST) complex that catalyzes the initial transfer of a defined glycan (Glc(3)Man(9)GlcNAc(2) in eukaryotes) from the lipid carrier dolichol-pyrophosphate to an asparagine residue within an Asn-X-Ser/Thr consensus motif in nascent polypeptide chains, the first step in protein N-glycosylation. N-glycosylation occurs cotranslationally and the complex associates with the Sec61 complex at the channel-forming translocon complex that mediates protein translocation across the endoplasmic reticulum (ER). All subunits are required for a maximal enzyme activity. The protein is Protein KRTCAP2 homolog of Drosophila melanogaster (Fruit fly).